A 212-amino-acid chain; its full sequence is Nucleoside diphosphate kinase homolog 5 (212 aa).

The interval 13 to 145 (EKTLAIIKPD…EREIRFMFPE (133 aa)) is NDK.

The protein belongs to the NDK family. As to quaternary structure, component of the axonemal radial spoke complex 1 (RS1), at least composed of spoke head proteins RSPH1, RSPH3, RSPH9 and the cilia-specific component RSPH4A or sperm-specific component RSPH6A, spoke stalk proteins RSPH14, DNAJB13, DYDC1, ROPN1L and NME5, and the anchor protein IQUB. Interacts with IQUB. In terms of tissue distribution, specifically expressed in testis germinal cells.

Its subcellular location is the cell projection. The protein localises to the cilium. It localises to the cytoplasm. It is found in the cytoskeleton. The protein resides in the flagellum axoneme. In terms of biological role, functions as part of axonemal radial spoke complexes that play an important part in the motility of sperm and cilia. Does not seem to have nucleoside diphosphate kinase (NDPK) activity. Confers protection from cell death by BAX and alters the cellular levels of several antioxidant enzymes including GPX5. May play a role in spermiogenesis by increasing the ability of late-stage spermatids to eliminate reactive oxygen species. Exhibits a 3'-5' exonuclease activity with a preference for single-stranded DNA, suggesting roles in DNA proofreading and repair. This is Nucleoside diphosphate kinase homolog 5 from Homo sapiens (Human).